A 409-amino-acid chain; its full sequence is Divalent metal cation transporter MntH (409 aa).

Transmembrane regions (helical) follow at residues 19–39, 46–66, 98–118, 122–142, 155–175, 196–216, 241–261, 290–310, 320–340, 348–368, and 388–408; these read LSLM…GNFA, ATFG…AMLV, WVQA…GAAI, LLFG…TFLI, LVIG…LIFS, AVFL…IYLH, IAMT…AAAF, VFGL…TLAG, FYIP…IVIL, ILVM…VPLL, and ILGK…LISL.

It belongs to the NRAMP family.

It is found in the cell inner membrane. Functionally, h(+)-stimulated, divalent metal cation uptake system. This Yersinia pseudotuberculosis serotype O:1b (strain IP 31758) protein is Divalent metal cation transporter MntH.